The chain runs to 215 residues: MFQSKNIKNFLKNRFRGFYPVVIDVETAGFDPYRDALLEIAIITLRMDDNGFLRIDNKLHFNIIPTPGLNIKKSALKFNKIDPYNPFRAAINERKAIKEIFNTVRLGIKKQSCSKAVVVAHNAYFDHSFLMSAVDRSKIKYNPFHSFSTFDTATLSGLVLGQTVLSKACIIAGIEFNNNYAHSALYDSKKTAELFCEIVNRWKKMGGWPIPKNRK.

The 175-residue stretch at 21–195 folds into the Exonuclease domain; sequence VVIDVETAGF…YDSKKTAELF (175 aa). Mg(2+) is bound by residues aspartate 24, glutamate 26, histidine 182, and aspartate 187. Residue histidine 182 is the Proton donor/acceptor of the active site.

It belongs to the RNase T family. As to quaternary structure, homodimer. Requires Mg(2+) as cofactor.

Trims short 3' overhangs of a variety of RNA species, leaving a one or two nucleotide 3' overhang. Responsible for the end-turnover of tRNA: specifically removes the terminal AMP residue from uncharged tRNA (tRNA-C-C-A). Also appears to be involved in tRNA biosynthesis. The chain is Ribonuclease T from Wigglesworthia glossinidia brevipalpis.